The chain runs to 525 residues: ATP-dependent RNA helicase dbp8 (525 aa).

Residues 1 to 29 (MAPLSTPESISREISVSSDASADESTSLD) are compositionally biased toward polar residues. A disordered region spans residues 1–76 (MAPLSTPESI…TNATSSRKDD (76 aa)). The short motif at 95–123 (NSFKALNVAPWLVGSLTTMAVRKPTAIQR) is the Q motif element. Residues 126 to 305 (IPEILKGRDC…SMPQTPGKPP (180 aa)) enclose the Helicase ATP-binding domain. 139-146 (SRTGSGKT) contributes to the ATP binding site. The DEAD box motif lies at 248–251 (DEAD). The 148-residue stretch at 337 to 484 (AFLHVLLSTE…EYEEEGVNLE (148 aa)) folds into the Helicase C-terminal domain.

It belongs to the DEAD box helicase family. DDX49/DBP8 subfamily.

The protein localises to the nucleus. The protein resides in the nucleolus. The enzyme catalyses ATP + H2O = ADP + phosphate + H(+). Its function is as follows. ATP-binding RNA helicase involved in 40S ribosomal subunit biogenesis and is required for the normal formation of 18S rRNAs through pre-rRNA processing at A0, A1 and A2 sites. Required for vegetative growth. The polypeptide is ATP-dependent RNA helicase dbp8 (dbp8) (Emericella nidulans (strain FGSC A4 / ATCC 38163 / CBS 112.46 / NRRL 194 / M139) (Aspergillus nidulans)).